Here is a 116-residue protein sequence, read N- to C-terminus: Beta-2-microglobulin (116 aa).

Residues 1–19 form the signal peptide; it reads MKFLLSFVVLAVFSASAFA. The region spanning 24–111 is the Ig-like C1-type domain; the sequence is PKIQVYSRNP…RHLKETKNIS (88 aa). C44 and C99 are oxidised to a cystine.

The protein belongs to the beta-2-microglobulin family. As to quaternary structure, heterodimer of an alpha chain and a beta chain. Beta-2-microglobulin is the beta-chain of major histocompatibility complex class I molecules.

The protein resides in the secreted. In terms of biological role, component of the class I major histocompatibility complex (MHC). Involved in the presentation of peptide antigens to the immune system. The polypeptide is Beta-2-microglobulin (b2m) (Ictalurus punctatus (Channel catfish)).